The following is a 449-amino-acid chain: Glucose-6-phosphate isomerase (449 aa).

E291 acts as the Proton donor in catalysis. Catalysis depends on residues H312 and K426.

Belongs to the GPI family.

It is found in the cytoplasm. It catalyses the reaction alpha-D-glucose 6-phosphate = beta-D-fructose 6-phosphate. It functions in the pathway carbohydrate biosynthesis; gluconeogenesis. The protein operates within carbohydrate degradation; glycolysis; D-glyceraldehyde 3-phosphate and glycerone phosphate from D-glucose: step 2/4. Functionally, catalyzes the reversible isomerization of glucose-6-phosphate to fructose-6-phosphate. This is Glucose-6-phosphate isomerase from Streptococcus pneumoniae (strain CGSP14).